Reading from the N-terminus, the 112-residue chain is DNA-binding protein TK1278 (112 aa).

The protein belongs to the PDCD5 family.

The chain is DNA-binding protein TK1278 from Thermococcus kodakarensis (strain ATCC BAA-918 / JCM 12380 / KOD1) (Pyrococcus kodakaraensis (strain KOD1)).